The following is a 401-amino-acid chain: Tyrosine--tRNA ligase (401 aa).

The 'HIGH' region motif lies at 43–52 (PTAPDLHLGH). Positions 227 to 231 (KMSKS) match the 'KMSKS' region motif. ATP is bound at residue Lys-230. The S4 RNA-binding domain occupies 338-399 (MAIGNVLKEA…GKRRFAKINL (62 aa)).

It belongs to the class-I aminoacyl-tRNA synthetase family. TyrS type 2 subfamily. In terms of assembly, homodimer.

Its subcellular location is the cytoplasm. The enzyme catalyses tRNA(Tyr) + L-tyrosine + ATP = L-tyrosyl-tRNA(Tyr) + AMP + diphosphate + H(+). Catalyzes the attachment of tyrosine to tRNA(Tyr) in a two-step reaction: tyrosine is first activated by ATP to form Tyr-AMP and then transferred to the acceptor end of tRNA(Tyr). The protein is Tyrosine--tRNA ligase of Idiomarina loihiensis (strain ATCC BAA-735 / DSM 15497 / L2-TR).